A 366-amino-acid chain; its full sequence is G-protein coupled receptor 183 (366 aa).

At 1–37 the chain is on the extracellular side; it reads MQVMRTFNQPPTSSHPTPTLNDSDTCITLYNHRGYAR. Asn-21 is a glycosylation site (N-linked (GlcNAc...) asparagine). A helical transmembrane segment spans residues 38 to 63; it reads VLMPLFYCIVFFVGLLGNALAFHIIR. Over 64–83 the chain is Cytoplasmic; it reads PNVKKINSTTLYSANLVISD. The chain crosses the membrane as a helical span at residues 84-101; the sequence is ILFTLSLPLRIIYYALGF. The Extracellular segment spans residues 102 to 111; the sequence is HWPLGETLCK. The cysteines at positions 110 and 188 are disulfide-linked. A helical transmembrane segment spans residues 112–133; it reads IVGLIFYINTYAGVNFMTCLSV. The Cytoplasmic portion of the chain corresponds to 134–155; it reads DRFIAVVLPLRFARFRKVSNVR. The helical transmembrane segment at 156 to 174 threads the bilayer; sequence YICVGVWLLVLMQTLPLLS. The Extracellular portion of the chain corresponds to 175 to 199; it reads MPMTNEEPDGFITCMEYPNFEPVPN. Residues 200–222 traverse the membrane as a helical segment; the sequence is ISYILIGAVFLGYGVPVVTILVC. Residues 223 to 248 are Cytoplasmic-facing; the sequence is YSILCCKLRLAAKANQLTDKSGRSQK. Residues 249–272 traverse the membrane as a helical segment; it reads AIGVICCVSLVFVVCFSPYHIDLL. The Extracellular segment spans residues 273–292; sequence QYMIRKLIYTPDCAELTAFQ. The chain crosses the membrane as a helical span at residues 293–317; it reads ISLHFTVCLMNLNSCLDPFIYFFAC. Topologically, residues 318–366 are cytoplasmic; the sequence is KGYKTKVLKILKRQVSVSFSSAARTLPEGLSRDISDGNKIHLNSTRHKE.

It belongs to the G-protein coupled receptor 1 family.

It localises to the cell membrane. Functionally, G-protein coupled receptor expressed in lymphocytes that acts as a chemotactic receptor for B-cells, T-cells, splenic dendritic cells, monocytes/macrophages and astrocytes. Receptor for oxysterol 7-alpha,25-dihydroxycholesterol (7-alpha,25-OHC) and other related oxysterols. Mediates cell positioning and movement of a number of cells by binding the 7-alpha,25-OHC ligand that forms a chemotactic gradient. Binding of 7-alpha,25-OHC mediates the correct localization of B-cells during humoral immune responses. The polypeptide is G-protein coupled receptor 183 (gpr183) (Salmo salar (Atlantic salmon)).